The chain runs to 497 residues: 3-octaprenyl-4-hydroxybenzoate carboxy-lyase (497 aa).

Mn(2+) is bound at residue N175. Prenylated FMN-binding positions include 178-180, 192-194, and 197-198; these read IYR, RWL, and RG. A Mn(2+)-binding site is contributed by E241. D290 functions as the Proton donor in the catalytic mechanism.

It belongs to the UbiD family. As to quaternary structure, homohexamer. It depends on prenylated FMN as a cofactor. Requires Mn(2+) as cofactor.

It is found in the cell membrane. The enzyme catalyses a 4-hydroxy-3-(all-trans-polyprenyl)benzoate + H(+) = a 2-(all-trans-polyprenyl)phenol + CO2. It functions in the pathway cofactor biosynthesis; ubiquinone biosynthesis. Its function is as follows. Catalyzes the decarboxylation of 3-octaprenyl-4-hydroxy benzoate to 2-octaprenylphenol, an intermediate step in ubiquinone biosynthesis. The polypeptide is 3-octaprenyl-4-hydroxybenzoate carboxy-lyase (Escherichia coli O157:H7).